We begin with the raw amino-acid sequence, 421 residues long: 4-aminobutyrate aminotransferase PuuE (421 aa).

Residues 110-111 and 238-241 each bind pyridoxal 5'-phosphate; these read GA and DEVQ. Residue lysine 267 is modified to N6-(pyridoxal phosphate)lysine. A pyridoxal 5'-phosphate-binding site is contributed by threonine 296.

The protein belongs to the class-III pyridoxal-phosphate-dependent aminotransferase family. It depends on pyridoxal 5'-phosphate as a cofactor.

The enzyme catalyses 4-aminobutanoate + 2-oxoglutarate = succinate semialdehyde + L-glutamate. It participates in amine and polyamine degradation; putrescine degradation; succinate semialdehyde from 4-aminobutanoate. With respect to regulation, completely inhibited by succinate and low-aeration conditions. Catalyzes the transfer of the amino group from gamma-aminobutyrate (GABA) to alpha-ketoglutarate (KG) to yield succinic semialdehyde (SSA). PuuE is important for utilization of putrescine as the sole nitrogen or carbon source. In Escherichia coli (strain K12), this protein is 4-aminobutyrate aminotransferase PuuE (puuE).